We begin with the raw amino-acid sequence, 232 residues long: Octanoyltransferase (232 aa).

The 176-residue stretch at Glu-44 to Leu-219 folds into the BPL/LPL catalytic domain. Substrate contacts are provided by residues Arg-83–His-90, Ala-150–Gly-152, and Gly-163–Ser-165. The active-site Acyl-thioester intermediate is Cys-181.

Belongs to the LipB family.

It is found in the cytoplasm. The catalysed reaction is octanoyl-[ACP] + L-lysyl-[protein] = N(6)-octanoyl-L-lysyl-[protein] + holo-[ACP] + H(+). It participates in protein modification; protein lipoylation via endogenous pathway; protein N(6)-(lipoyl)lysine from octanoyl-[acyl-carrier-protein]: step 1/2. Catalyzes the transfer of endogenously produced octanoic acid from octanoyl-acyl-carrier-protein onto the lipoyl domains of lipoate-dependent enzymes. Lipoyl-ACP can also act as a substrate although octanoyl-ACP is likely to be the physiological substrate. The polypeptide is Octanoyltransferase (Xanthomonas campestris pv. campestris (strain 8004)).